We begin with the raw amino-acid sequence, 353 residues long: Putative 3-oxoacyl-[acyl-carrier-protein] synthase 3 (353 aa).

Residues Cys-122, His-268, and Asn-299 contribute to the active site.

The protein belongs to the thiolase-like superfamily. FabH family. As to quaternary structure, homodimer.

The protein localises to the cytoplasm. It carries out the reaction malonyl-[ACP] + acetyl-CoA + H(+) = 3-oxobutanoyl-[ACP] + CO2 + CoA. It participates in lipid metabolism; fatty acid biosynthesis. May catalyze the condensation reaction of fatty acid synthesis by the addition to an acyl acceptor of two carbons from malonyl-ACP. The sequence is that of Putative 3-oxoacyl-[acyl-carrier-protein] synthase 3 from Campylobacter jejuni subsp. jejuni serotype O:2 (strain ATCC 700819 / NCTC 11168).